The chain runs to 231 residues: Large ribosomal subunit protein uL1 (231 aa).

It belongs to the universal ribosomal protein uL1 family. Part of the 50S ribosomal subunit.

Functionally, binds directly to 23S rRNA. The L1 stalk is quite mobile in the ribosome, and is involved in E site tRNA release. In terms of biological role, protein L1 is also a translational repressor protein, it controls the translation of the L11 operon by binding to its mRNA. The chain is Large ribosomal subunit protein uL1 from Neisseria meningitidis serogroup A / serotype 4A (strain DSM 15465 / Z2491).